Reading from the N-terminus, the 550-residue chain is Glucose-6-phosphate isomerase (550 aa).

Residues 163–164 (GS), 214–219 (SKTFTT), glutamine 358, glutamate 362, histidine 393, and lysine 515 contribute to the D-glucose 6-phosphate site. The Proton donor role is filled by glutamate 362. Residues histidine 393 and lysine 515 contribute to the active site.

It belongs to the GPI family. As to quaternary structure, homodimer.

The protein resides in the cytoplasm. The enzyme catalyses alpha-D-glucose 6-phosphate = beta-D-fructose 6-phosphate. It functions in the pathway carbohydrate degradation; glycolysis; D-glyceraldehyde 3-phosphate and glycerone phosphate from D-glucose: step 2/4. Its function is as follows. In the cytoplasm, catalyzes the conversion of glucose-6-phosphate to fructose-6-phosphate, the second step in glycolysis, and the reverse reaction during gluconeogenesis. The polypeptide is Glucose-6-phosphate isomerase (PGI1) (Candida albicans (strain SC5314 / ATCC MYA-2876) (Yeast)).